A 141-amino-acid polypeptide reads, in one-letter code: Large ribosomal subunit protein uL23A (141 aa).

A phosphoserine mark is found at Ser-68 and Ser-70.

The protein belongs to the universal ribosomal protein uL23 family. Component of the large ribosomal subunit (LSU). Mature yeast ribosomes consist of a small (40S) and a large (60S) subunit. The 40S small subunit contains 1 molecule of ribosomal RNA (18S rRNA) and at least 33 different proteins. The large 60S subunit contains 3 rRNA molecules (25S, 5.8S and 5S rRNA) and at least 46 different proteins. uL23 is associated with the polypeptide exit tunnel.

The protein resides in the cytoplasm. Functionally, this protein binds to a specific region on the 26S rRNA. Component of the ribosome, a large ribonucleoprotein complex responsible for the synthesis of proteins in the cell. The small ribosomal subunit (SSU) binds messenger RNAs (mRNAs) and translates the encoded message by selecting cognate aminoacyl-transfer RNA (tRNA) molecules. The large subunit (LSU) contains the ribosomal catalytic site termed the peptidyl transferase center (PTC), which catalyzes the formation of peptide bonds, thereby polymerizing the amino acids delivered by tRNAs into a polypeptide chain. The nascent polypeptides leave the ribosome through a tunnel in the LSU and interact with protein factors that function in enzymatic processing, targeting, and the membrane insertion of nascent chains at the exit of the ribosomal tunnel. uL23 is a major component of the universal docking site for these factors at the polypeptide exit tunnel. This chain is Large ribosomal subunit protein uL23A (rpl2501), found in Schizosaccharomyces pombe (strain 972 / ATCC 24843) (Fission yeast).